Here is a 730-residue protein sequence, read N- to C-terminus: Ribosomal RNA large subunit methyltransferase K/L (730 aa).

In terms of domain architecture, THUMP spans 46-157 (TAYRLCVWSR…RGEAILSLDL (112 aa)). The interval 395–418 (ERREAQPEGTEVRQQAPQASEPAR) is disordered.

Belongs to the methyltransferase superfamily. RlmKL family.

It localises to the cytoplasm. The enzyme catalyses guanosine(2445) in 23S rRNA + S-adenosyl-L-methionine = N(2)-methylguanosine(2445) in 23S rRNA + S-adenosyl-L-homocysteine + H(+). It carries out the reaction guanosine(2069) in 23S rRNA + S-adenosyl-L-methionine = N(2)-methylguanosine(2069) in 23S rRNA + S-adenosyl-L-homocysteine + H(+). Specifically methylates the guanine in position 2445 (m2G2445) and the guanine in position 2069 (m7G2069) of 23S rRNA. The protein is Ribosomal RNA large subunit methyltransferase K/L of Pseudomonas putida (strain GB-1).